A 415-amino-acid polypeptide reads, in one-letter code: Secernin-2 (415 aa).

Cys-8 is an active-site residue.

The protein belongs to the peptidase C69 family. Secernin subfamily.

The protein is Secernin-2 (scrn2) of Danio rerio (Zebrafish).